The chain runs to 355 residues: C-C chemokine receptor type 8 (355 aa).

The Extracellular portion of the chain corresponds to 1-35; that stretch reads MDYTLDLSVTTVTDYYYPDIFSSPCDAELIQTNGK. The chain crosses the membrane as a helical span at residues 36 to 63; the sequence is LLLAVFYCLLFVFSLLGNSLVILVLVVC. The Cytoplasmic portion of the chain corresponds to 64–73; sequence KKLRSITDVY. The helical transmembrane segment at 74-93 threads the bilayer; the sequence is LLNLALSDLLFVFSFPFQTY. The Extracellular portion of the chain corresponds to 94 to 107; sequence YLLDQWVFGTVMCK. Cys-106 and Cys-183 are oxidised to a cystine. A helical membrane pass occupies residues 108-129; the sequence is VVSGFYYIGFYSSMFFITLMSV. Residues 130 to 146 are Cytoplasmic-facing; the sequence is DRYLAVVHAVYALKVRT. A helical membrane pass occupies residues 147–171; sequence IRMGTTLCLAVWLTAIMATIPLLVF. Topologically, residues 172-202 are extracellular; it reads YQVASEDGVLQCYSFYNQQTLKWKIFTNFKM. The helical transmembrane segment at 203–222 threads the bilayer; the sequence is NILGLLIPFTIFMFCYIKIL. Residues 223-238 lie on the Cytoplasmic side of the membrane; sequence HQLKRCQNHNKTKAIR. Residues 239–263 traverse the membrane as a helical segment; it reads LVLIVVIASLLFWVPFNVVLFLTSL. At 264-280 the chain is on the extracellular side; that stretch reads HSMHILDGCSISQQLTY. The chain crosses the membrane as a helical span at residues 281–304; the sequence is ATHVTEIISFTHCCVNPVIYAFVG. Residues 305 to 355 are Cytoplasmic-facing; the sequence is EKFKKHLSEIFQKSCSQIFNYLGRQMPRESCEKSSSCQQHSSRSSSVDYIL.

Belongs to the G-protein coupled receptor 1 family.

It is found in the cell membrane. Functionally, receptor for the chemokine CCL1/SCYA1/I-309. May regulate monocyte chemotaxis and thymic cell line apoptosis. Alternative coreceptor with CD4 for HIV-1 infection. The chain is C-C chemokine receptor type 8 (CCR8) from Homo sapiens (Human).